The following is a 453-amino-acid chain: Glutamyl-tRNA(Gln) amidotransferase subunit A (453 aa).

Catalysis depends on charge relay system residues lysine 55 and serine 130. Serine 154 acts as the Acyl-ester intermediate in catalysis.

Belongs to the amidase family. GatA subfamily. As to quaternary structure, heterotrimer of A, B and C subunits.

It carries out the reaction L-glutamyl-tRNA(Gln) + L-glutamine + ATP + H2O = L-glutaminyl-tRNA(Gln) + L-glutamate + ADP + phosphate + H(+). Allows the formation of correctly charged Gln-tRNA(Gln) through the transamidation of misacylated Glu-tRNA(Gln) in organisms which lack glutaminyl-tRNA synthetase. The reaction takes place in the presence of glutamine and ATP through an activated gamma-phospho-Glu-tRNA(Gln). This chain is Glutamyl-tRNA(Gln) amidotransferase subunit A, found in Aliarcobacter butzleri (strain RM4018) (Arcobacter butzleri).